The chain runs to 35 residues: Potassium channel toxin alpha-KTx 23.2 (35 aa).

Intrachain disulfides connect Cys-6-Cys-26, Cys-12-Cys-31, and Cys-16-Cys-33.

The protein belongs to the short scorpion toxin superfamily. Potassium channel inhibitor family. Alpha-KTx 23 subfamily. As to expression, expressed by the venom gland.

It localises to the secreted. Its function is as follows. Selectively and irreversibly binds (K(d)=2.9 pM) and blocks Kv1.3/KCNA3 potassium channels of human T-lymphocytes. Weakly blocks Kv1.2/KCNA2 (9%). This chain is Potassium channel toxin alpha-KTx 23.2, found in Vaejovis mexicanus smithi (Mexican scorpion).